The chain runs to 183 residues: Capsid protein (183 aa).

Residues 136-183 are disordered; sequence NAPILSTLPETTVVRRRGRSPRRRTPSPRRRRSQSPRRRRSQSRESQC. Over residues 149 to 176 the composition is skewed to basic residues; it reads VRRRGRSPRRRTPSPRRRRSQSPRRRRS. 3 positions are modified to phosphoserine; by host: S155, S162, and S170. A 1; half-length repeat occupies 155 to 161; the sequence is SPRRRTP. The 3 X 8 AA repeats of S-P-R-R-R-[PR]-S-Q stretch occupies residues 155–177; the sequence is SPRRRTPSPRRRRSQSPRRRRSQ. The short motif at 158-175 is the Bipartite nuclear localization signal element; sequence RRTPSPRRRRSQSPRRRR. A run of 2 repeats spans residues 162–169 and 170–177. The interval 177-183 is RNA binding; that stretch reads QSRESQC.

Belongs to the orthohepadnavirus core antigen family. As to quaternary structure, homodimerizes, then multimerizes. Interacts with cytosol exposed regions of viral L glycoprotein present in the reticulum-to-Golgi compartment. Interacts with human FLNB. Phosphorylated form interacts with host importin alpha; this interaction depends on the exposure of the NLS, which itself depends upon genome maturation and/or phosphorylation of the capsid protein. Interacts with host NUP153. Post-translationally, phosphorylated by host SRPK1, SRPK2, and maybe protein kinase C or GAPDH. Phosphorylation is critical for pregenomic RNA packaging. Protein kinase C phosphorylation is stimulated by HBx protein and may play a role in transport of the viral genome to the nucleus at the late step during the viral replication cycle.

It localises to the virion. Its subcellular location is the host cytoplasm. Its function is as follows. Self assembles to form an icosahedral capsid. Most capsids appear to be large particles with an icosahedral symmetry of T=4 and consist of 240 copies of capsid protein, though a fraction forms smaller T=3 particles consisting of 180 capsid proteins. Entering capsids are transported along microtubules to the nucleus. Phosphorylation of the capsid is thought to induce exposure of nuclear localization signal in the C-terminal portion of the capsid protein that allows binding to the nuclear pore complex via the importin (karyopherin-) alpha and beta. Capsids are imported in intact form through the nuclear pore into the nuclear basket, where it probably binds NUP153. Only capsids that contain the mature viral genome can release the viral DNA and capsid protein into the nucleoplasm. Immature capsids get stuck in the basket. Capsids encapsulate the pre-genomic RNA and the P protein. Pre-genomic RNA is reverse-transcribed into DNA while the capsid is still in the cytoplasm. The capsid can then either be directed to the nucleus, providing more genomes for transcription, or bud through the endoplasmic reticulum to provide new virions. The chain is Capsid protein from Hepatitis B virus genotype B1 subtype adw (isolate Japan/pJDW233/1988) (HBV-B).